Here is a 501-residue protein sequence, read N- to C-terminus: Glycerol kinase (501 aa).

An ADP-binding site is contributed by Thr11. Residues Thr11, Thr12, and Ser13 each contribute to the ATP site. A sn-glycerol 3-phosphate-binding site is contributed by Thr11. Arg15 is a binding site for ADP. The sn-glycerol 3-phosphate site is built by Arg81, Glu82, Tyr133, and Asp242. 5 residues coordinate glycerol: Arg81, Glu82, Tyr133, Asp242, and Gln243. ADP-binding residues include Thr264 and Gly307. Positions 264, 307, 311, and 409 each coordinate ATP. 2 residues coordinate ADP: Gly409 and Asn413.

The protein belongs to the FGGY kinase family.

It catalyses the reaction glycerol + ATP = sn-glycerol 3-phosphate + ADP + H(+). Its pathway is polyol metabolism; glycerol degradation via glycerol kinase pathway; sn-glycerol 3-phosphate from glycerol: step 1/1. Inhibited by fructose 1,6-bisphosphate (FBP). Key enzyme in the regulation of glycerol uptake and metabolism. Catalyzes the phosphorylation of glycerol to yield sn-glycerol 3-phosphate. The polypeptide is Glycerol kinase (Borreliella afzelii (strain PKo) (Borrelia afzelii)).